Consider the following 241-residue polypeptide: MRILAAGSLRQPFTLWQQALIQQYQLQVEIEFGPAGLLCQRIEQGEKVDLFASANDVHPRSLQARYPHIQLVPFATNRLCLITKKSVITHHDENWLTLLMSPHLRLGVSTPKADPCGDYTLALFSNIEKRHMGYGSKLKEKAMAIVGGPDSITIPTGRNTAEWLFEQNYADLFIGYASNHQSLRQHSDICVLDIPDEYNVRANYTLAAFTAEALRLVDSLLCLTCGQKYLRDCGFLPANHT.

This is an uncharacterized protein from Pasteurella multocida (strain Pm70).